The primary structure comprises 654 residues: uncharacterized protein (654 aa).

The span at 1 to 13 (MSNLILTPSNNGT) shows a compositional bias: polar residues. Residues 1–23 (MSNLILTPSNNGTERPYRSRKTR) are disordered. The segment at residues 25–54 (CDNCRLRKSRCVVESIGNPCLLCTQLKIPC) is a DNA-binding region (zn(2)-C6 fungal-type). The disordered stretch occupies residues 63–96 (RNKQKKQQDSVSDDTPSEATTTTNDDRDPKYNAL).

The protein localises to the cytoplasm. It is found in the nucleus. This is an uncharacterized protein from Schizosaccharomyces pombe (strain 972 / ATCC 24843) (Fission yeast).